The primary structure comprises 752 residues: Phosphoribosylformylglycinamidine synthase subunit PurL (752 aa).

His-58 is an active-site residue. Tyr-61 and Lys-103 together coordinate ATP. Glu-105 lines the Mg(2+) pocket. Substrate-binding positions include 106-109 (SHNH) and Arg-128. The Proton acceptor role is filled by His-107. Residue Asp-129 coordinates Mg(2+). Gln-253 contributes to the substrate binding site. Asp-281 lines the Mg(2+) pocket. 325-327 (ESQ) is a binding site for substrate. The ATP site is built by Asp-513 and Gly-550. Residue Asn-551 participates in Mg(2+) binding. Substrate is bound at residue Ser-553.

It belongs to the FGAMS family. Monomer. Part of the FGAM synthase complex composed of 1 PurL, 1 PurQ and 2 PurS subunits.

Its subcellular location is the cytoplasm. It catalyses the reaction N(2)-formyl-N(1)-(5-phospho-beta-D-ribosyl)glycinamide + L-glutamine + ATP + H2O = 2-formamido-N(1)-(5-O-phospho-beta-D-ribosyl)acetamidine + L-glutamate + ADP + phosphate + H(+). It functions in the pathway purine metabolism; IMP biosynthesis via de novo pathway; 5-amino-1-(5-phospho-D-ribosyl)imidazole from N(2)-formyl-N(1)-(5-phospho-D-ribosyl)glycinamide: step 1/2. In terms of biological role, part of the phosphoribosylformylglycinamidine synthase complex involved in the purines biosynthetic pathway. Catalyzes the ATP-dependent conversion of formylglycinamide ribonucleotide (FGAR) and glutamine to yield formylglycinamidine ribonucleotide (FGAM) and glutamate. The FGAM synthase complex is composed of three subunits. PurQ produces an ammonia molecule by converting glutamine to glutamate. PurL transfers the ammonia molecule to FGAR to form FGAM in an ATP-dependent manner. PurS interacts with PurQ and PurL and is thought to assist in the transfer of the ammonia molecule from PurQ to PurL. The protein is Phosphoribosylformylglycinamidine synthase subunit PurL of Streptomyces coelicolor (strain ATCC BAA-471 / A3(2) / M145).